A 618-amino-acid chain; its full sequence is Alpha-dioxygenase PIOX (618 aa).

The active-site Proton acceptor is the H157. D158 provides a ligand contact to Ca(2+). H162 is a heme b binding site. 4 residues coordinate Ca(2+): T210, W212, D214, and S216. H311 serves as a coordination point for hexadecanoate. Positions 382, 479, and 483 each coordinate heme b. E599 is a hexadecanoate binding site.

It belongs to the peroxidase family. Requires heme b as cofactor. The cofactor is Ca(2+).

It catalyses the reaction a 1,2-saturated fatty acid + O2 = a (2R)-2-hydroperoxy fatty acid. The enzyme catalyses (9Z,12Z)-octadecadienoate + O2 = (2R,9Z,12Z)-2-hydroperoxyoctadecadienoate. The catalysed reaction is hexadecanoate + O2 = (2R)-2-hydroperoxyhexadecanoate. It carries out the reaction (9Z,12Z,15Z)-octadecatrienoate + O2 = (R)-2-hydroperoxy-(9Z,12Z,15Z)-octadecatrienoate. It catalyses the reaction tetradecanoate + O2 = (2R)-2-hydroperoxytetradecanoate. The enzyme catalyses octadecanoate + O2 = (2R)-2-hydroperoxyoctadecanoate. The catalysed reaction is (9Z)-octadecenoate + O2 = (2R,9Z)-2-hydroperoxyoctadecenoate. Alpha-dioxygenase that catalyzes the primary oxygenation step of a variety of 14-20 carbon fatty acids, containing up to three unsaturated bonds, into their corresponding 2R-hydroperoxides. Involved in the production of oxylipins that function in cell signaling, wound healing, and protection from infection. This chain is Alpha-dioxygenase PIOX, found in Oryza sativa subsp. japonica (Rice).